The sequence spans 624 residues: Actin-related protein 8 (624 aa).

Residue M1 is modified to N-acetylmethionine. The segment covering 1-25 (MTQAEKGDAENGKEKGGEKEKEQRG) has biased composition (basic and acidic residues). Residues 1–29 (MTQAEKGDAENGKEKGGEKEKEQRGVKRP) are disordered. The ATP site is built by S55 and T56. S132 bears the Phosphoserine mark. Residue 283–286 (DVGD) coordinates ATP. S412 is modified (phosphoserine). A disordered region spans residues 430–460 (SKQEQSAKATADRKSASKPIGFEGDLRGQSS).

The protein belongs to the actin family. ARP8 subfamily. As to quaternary structure, component of the chromatin remodeling INO80 complex; specifically part of a complex module associated with the DBINO domain of INO80. Exists as monomers and dimers, but the dimer is most probably the biologically relevant form required for stable interactions with histones that exploits the twofold symmetry of the nucleosome core.

Its subcellular location is the nucleus. The protein localises to the chromosome. In terms of biological role, plays an important role in the functional organization of mitotic chromosomes. Exhibits low basal ATPase activity, and unable to polymerize. Functionally, proposed core component of the chromatin remodeling INO80 complex which is involved in transcriptional regulation, DNA replication and probably DNA repair. Required for the recruitment of INO80 (and probably the INO80 complex) to sites of DNA damage Strongly prefer nucleosomes and H3-H4 tetramers over H2A-H2B dimers, suggesting it may act as a nucleosome recognition module within the complex. The sequence is that of Actin-related protein 8 (ACTR8) from Ailuropoda melanoleuca (Giant panda).